The chain runs to 78 residues: MKTLLLTLVVVTIVCLDFGYTIVCYKRHASDSQTTTCLSGICYKKITRGISRPEMGCGCPQSSRGVKVECCMRDKCNG.

An N-terminal signal peptide occupies residues 1 to 21 (MKTLLLTLVVVTIVCLDFGYT). 4 disulfides stabilise this stretch: C24–C42, C37–C57, C59–C70, and C71–C76.

The protein belongs to the three-finger toxin family. Short-chain subfamily. Orphan group XII sub-subfamily. In terms of tissue distribution, expressed by the venom gland.

It localises to the secreted. This is Alpha-neurotoxin homolog 1 from Micrurus corallinus (Brazilian coral snake).